The primary structure comprises 407 residues: Biotin synthase (407 aa).

The Radical SAM core domain maps to 47 to 277 (WFGRRVKLNY…DVEVRIAGGR (231 aa)). Residues Cys-65, Cys-69, and Cys-72 each contribute to the [4Fe-4S] cluster site. [2Fe-2S] cluster is bound by residues Cys-109, Cys-142, Cys-202, and Arg-272. Residues 368 to 407 (GGGVCAPAPAATTPRPAEEPRTDLVAVRRRGAGTDLAPNA) are disordered. Low complexity predominate over residues 373–382 (APAPAATTPR).

The protein belongs to the radical SAM superfamily. Biotin synthase family. In terms of assembly, homodimer. It depends on [4Fe-4S] cluster as a cofactor. [2Fe-2S] cluster serves as cofactor.

The catalysed reaction is (4R,5S)-dethiobiotin + (sulfur carrier)-SH + 2 reduced [2Fe-2S]-[ferredoxin] + 2 S-adenosyl-L-methionine = (sulfur carrier)-H + biotin + 2 5'-deoxyadenosine + 2 L-methionine + 2 oxidized [2Fe-2S]-[ferredoxin]. It functions in the pathway cofactor biosynthesis; biotin biosynthesis; biotin from 7,8-diaminononanoate: step 2/2. Catalyzes the conversion of dethiobiotin (DTB) to biotin by the insertion of a sulfur atom into dethiobiotin via a radical-based mechanism. The sequence is that of Biotin synthase from Streptomyces coelicolor (strain ATCC BAA-471 / A3(2) / M145).